We begin with the raw amino-acid sequence, 1239 residues long: Structural polyprotein (1239 aa).

A necessary for nucleocapsid assembly and virus assembly region spans residues 1-35; the sequence is MFPYPTLNYPPMAPINPMAYRDPNPPRQVAPFRPP. Residues 1-101 form a disordered region; that stretch reads MFPYPTLNYP…RKPKPGKRQR (101 aa). A compositionally biased stretch (pro residues) spans 23 to 34; it reads PNPPRQVAPFRP. The host transcription inhibition stretch occupies residues 36–69; it reads LAAQIEDLRRSIANLTLKQRAPNPPAGPPAKRKK. The Supraphysiological nuclear export signal motif lies at 43–50; sequence LRRSIANL. Asn-49 carries N-linked (GlcNAc...) asparagine; by host glycosylation. The Nuclear localization signal signature appears at 66-69; that stretch reads KRKK. Residues 79–101 show a composition bias toward basic residues; sequence KKKRPPPPAKKQKRKPKPGKRQR. Residues 81–111 form a binding to the viral RNA region; sequence KRPPPPAKKQKRKPKPGKRQRMCMKLESDKT. Positions 96–110 are ribosome-binding; it reads PGKRQRMCMKLESDK. Residue Ser-108 is modified to Phosphoserine. A Peptidase S3 domain is found at 110–259; that stretch reads KTFPIMLNGQ…KDTPEGSEPW (150 aa). A Phosphothreonine modification is found at Thr-111. His-136 acts as the Charge relay system in catalysis. Residues 152–157 are interaction with spike glycoprotein E2; it reads KKASIY. Residues Asp-158 and Ser-210 each act as charge relay system in the active site. The interaction with spike glycoprotein E2 stretch occupies residues 244–248; that stretch reads QKGVT. The functions as an uncleaved signal peptide for the precursor of protein E3/E2 stretch occupies residues 260 to 271; it reads SLATVMCVLANI. Over 260–681 the chain is Extracellular; the sequence is SLATVMCVLA…HVVVVYYYNR (422 aa). 9 disulfide bridges follow: Cys-266–Cys-275, Cys-280–Cys-284, Cys-283–Cys-315, Cys-341–Cys-444, Cys-344–Cys-349, Cys-411–Cys-425, Cys-472–Cys-585, Cys-521–Cys-545, and Cys-523–Cys-539. A glycan (N-linked (GlcNAc...) asparagine; by host) is linked at Asn-270. The N-linked (GlcNAc...) asparagine; by host glycan is linked to Asn-637. The chain crosses the membrane as a helical span at residues 682-702; sequence YPLTTIIGLCTCVAIIMVSCD. The Cytoplasmic segment spans residues 703–742; it reads HPCGSFSGLRNLCITPYKLAPNAQVPILLALLCCIKPTRA. Residue Cys-705 is the site of S-palmitoyl cysteine; by host attachment. Residues 710 to 714 are interaction with the capsid protein; that stretch reads GLRNL. The transient transmembrane before p62-6K protein processing stretch occupies residues 714 to 734; it reads LCITPYKLAPNAQVPILLALL. Residues Cys-715, Cys-735, and Cys-736 are each lipidated (S-palmitoyl cysteine; by host). Cysteines 715 and 736 form a disulfide. The Extracellular portion of the chain corresponds to 743–754; the sequence is DDTLQVLNYLWN. The chain crosses the membrane as a helical span at residues 755 to 775; the sequence is NNQNFFWMQTLIPLAALIVCM. Arg-776 is a topological domain (cytoplasmic). The helical transmembrane segment at 777 to 797 threads the bilayer; sequence MLAALFCCGPAFLLVCGAWAA. Residues 798–1215 lie on the Extracellular side of the membrane; it reads AYEHTAVMPN…WSWLKVLVGG (418 aa). 4 disulfide bridges follow: Cys-847–Cys-912, Cys-860–Cys-892, Cys-861–Cys-894, and Cys-866–Cys-876. The tract at residues 882–899 is E1 fusion peptide loop; the sequence is VYPFMWGGAYCFCDTENT. Asn-932 and Asn-1069 each carry an N-linked (GlcNAc...) asparagine; by host glycan. Disulfide bonds link Cys-1058–Cys-1070, Cys-1100–Cys-1175, and Cys-1105–Cys-1179. Residues 1216–1236 traverse the membrane as a helical segment; it reads TSAFIVLGLIATAVVALVLFF. At 1237–1239 the chain is on the cytoplasmic side; that stretch reads HRH.

As to quaternary structure, homodimer. Homomultimer. Interacts with host karyopherin KPNA4; this interaction allows the nuclear import of the viral capsid protein. Interacts with spike glycoprotein E2. Interacts with host IRAK1; the interaction leads to inhibition of IRAK1-dependent signaling. Part of a tetrameric complex composed of host CRM1, host importin alpha/beta dimer and the viral capsid; this complex blocks the receptor-mediated transport through the nuclear pore. Interacts with host phosphatase PPP1CA; this interaction dephosphorylates the capsid protein, which increases its ability to bind to the viral genome. In terms of assembly, the precursor of protein E3/E2 and E1 form a heterodimer shortly after synthesis. The precursor of protein E3/E2 and E1 form a heterodimer shortly after synthesis. Processing of the precursor of protein E3/E2 into E2 and E3 results in a heterodimer of the spike glycoproteins E2 and E1. Spike at virion surface are constituted of three E2-E1 heterodimers. After target cell attachment and endocytosis, E1 change conformation to form homotrimers. E2-E1 heterodimers interact with host VLDLR or LRP8/APOER2 to mediate viral entry. Interacts with 6K protein. As to quaternary structure, interacts with spike glycoprotein E1. Processing of the precursor of protein E3/E2 into E2 and E3 results in a heterodimer of the spike glycoproteins E2 and E1. Spike at virion surface are constituted of a trimer of E2-E1 heterodimers. Interacts with 6K protein. E2-E1 heterodimers interact with host VLDLR or LRP8/APOER2 to mediate viral entry. Interacts (via E2-A) with host VLDLR (via class A repeats); this interaction mediates viral entry into host cell. Interacts with host LRP8/APOER2 (via class A repeats); this interaction mediates viral entry into host cell. In terms of assembly, oligomer. Interacts with spike glycoprotein E1. Interacts with spike glycoprotein E2. Structural polyprotein: Specific enzymatic cleavages in vivo yield mature proteins. Capsid protein is auto-cleaved during polyprotein translation, unmasking a signal peptide at the N-terminus of the precursor of E3/E2. The remaining polyprotein is then targeted to the host endoplasmic reticulum, where host signal peptidase cleaves it into pE2, 6K and E1 proteins. pE2 is further processed to mature E3 and E2 by host furin in trans-Golgi vesicle. In terms of processing, phosphorylated on serine and threonine residues. Post-translationally, palmitoylated via thioester bonds. These palmitoylations may induce disruption of the C-terminus transmembrane. This would result in the reorientation of E2 C-terminus from lumenal to cytoplasmic side. N-glycosylated. In terms of processing, palmitoylated via thioester bonds.

The protein resides in the virion. It localises to the host cytoplasm. The protein localises to the host cell membrane. Its subcellular location is the host nucleus. It is found in the virion membrane. The protein resides in the host Golgi apparatus. It localises to the host trans-Golgi network. The protein localises to the host endoplasmic reticulum. The enzyme catalyses Autocatalytic release of the core protein from the N-terminus of the togavirus structural polyprotein by hydrolysis of a -Trp-|-Ser- bond.. Forms an icosahedral capsid with a T=4 symmetry composed of 240 copies of the capsid protein surrounded by a lipid membrane through which penetrate 80 spikes composed of trimers of E1-E2 heterodimers. The capsid protein binds to the viral RNA genome at a site adjacent to a ribosome binding site for viral genome translation following genome release. Possesses a protease activity that results in its autocatalytic cleavage from the nascent structural protein. Following its self-cleavage, the capsid protein transiently associates with ribosomes, and within several minutes the protein binds to viral RNA and rapidly assembles into icosahedric core particles. The resulting nucleocapsid eventually associates with the cytoplasmic domain of the spike glycoprotein E2 at the cell membrane, leading to budding and formation of mature virions. In case of infection, new virions attach to target cells and after clathrin-mediated endocytosis their membrane fuses with the host endosomal membrane. This leads to the release of the nucleocapsid into the cytoplasm, followed by an uncoating event necessary for the genomic RNA to become accessible. The uncoating might be triggered by the interaction of capsid proteins with ribosomes. Binding of ribosomes would release the genomic RNA since the same region is genomic RNA-binding and ribosome-binding. Specifically inhibits interleukin-1 receptor-associated kinase 1/IRAK1-dependent signaling during viral entry, representing a means by which the alphaviruses may evade innate immune detection and activation prior to viral gene expression. Inhibits host transcription. Forms a tetrameric complex with XPO1/CRM1 and the nuclear import receptor importin. This complex blocks the central channel of host nuclear pores thereby inhibiting the receptor-mediated nuclear transport and thus the host mRNA and rRNA transcription. The inhibition of transcription is linked to a cytopathic effect on the host cell. Functionally, provides the signal sequence for the translocation of the precursor of protein E3/E2 to the host endoplasmic reticulum. Furin-cleaved E3 remains associated with spike glycoprotein E1 and mediates pH protection of the latter during the transport via the secretory pathway. After virion release from the host cell, the assembly protein E3 is gradually released in the extracellular space. Its function is as follows. Plays a role in viral attachment to target host cell, by binding to the cell receptors VLDLR or LRP8/APOER2. Synthesized as a p62 precursor which is processed by furin at the cell membrane just before virion budding, giving rise to E2-E1 heterodimer. The p62-E1 heterodimer is stable, whereas E2-E1 is unstable and dissociate at low pH. p62 is processed at the last step, presumably to avoid E1 fusion activation before its final export to cell surface. E2 C-terminus contains a transitory transmembrane that would be disrupted by palmitoylation, resulting in reorientation of the C-terminal tail from lumenal to cytoplasmic side. This step is critical since E2 C-terminus is involved in budding by interacting with capsid proteins. This release of E2 C-terminus in cytoplasm occurs lately in protein export, and precludes premature assembly of particles at the endoplasmic reticulum membrane. In terms of biological role, acts as a viroporin that participates in virus glycoprotein processing and transport to the plasma membrane, cell permeabilization and budding of viral particles. Disrupts the calcium homeostasis of the cell, probably at the endoplasmic reticulum level. This leads to cytoplasmic calcium elevation. Because of its lipophilic properties, the 6K protein is postulated to influence the selection of lipids that interact with the transmembrane domains of the glycoproteins, which, in turn, affects the deformability of the bilayer required for the extreme curvature that occurs as budding proceeds. Present in low amount in virions, about 3% compared to viral glycoproteins. Class II viral fusion protein. Fusion activity is inactive as long as E1 is bound to E2 in mature virion. After virus attachment to target cell via host VLDLR or LRP8/APOER2 and endocytosis, acidification of the endosome induces dissociation of E1/E2 heterodimer and concomitant trimerization of the E1 subunits. This E1 trimer is fusion active, and promotes release of viral nucleocapsid in cytoplasm after endosome and viral membrane fusion. Efficient fusion requires the presence of cholesterol and sphingolipid in the target membrane. The chain is Structural polyprotein from Aedes (Human).